The chain runs to 308 residues: Ribonuclease Z (308 aa).

Zn(2+) contacts are provided by His61, His63, Asp65, His66, His139, Asp210, and His268. The Proton acceptor role is filled by Asp65.

This sequence belongs to the RNase Z family. Homodimer. Zn(2+) serves as cofactor.

The enzyme catalyses Endonucleolytic cleavage of RNA, removing extra 3' nucleotides from tRNA precursor, generating 3' termini of tRNAs. A 3'-hydroxy group is left at the tRNA terminus and a 5'-phosphoryl group is left at the trailer molecule.. Functionally, zinc phosphodiesterase, which displays some tRNA 3'-processing endonuclease activity. Probably involved in tRNA maturation, by removing a 3'-trailer from precursor tRNA. This chain is Ribonuclease Z, found in Halobacterium salinarum (strain ATCC 700922 / JCM 11081 / NRC-1) (Halobacterium halobium).